We begin with the raw amino-acid sequence, 274 residues long: 2,3,4,5-tetrahydropyridine-2,6-dicarboxylate N-succinyltransferase (274 aa).

Positions 104 and 141 each coordinate substrate.

It belongs to the transferase hexapeptide repeat family. Homotrimer.

The protein localises to the cytoplasm. It catalyses the reaction (S)-2,3,4,5-tetrahydrodipicolinate + succinyl-CoA + H2O = (S)-2-succinylamino-6-oxoheptanedioate + CoA. It participates in amino-acid biosynthesis; L-lysine biosynthesis via DAP pathway; LL-2,6-diaminopimelate from (S)-tetrahydrodipicolinate (succinylase route): step 1/3. This is 2,3,4,5-tetrahydropyridine-2,6-dicarboxylate N-succinyltransferase from Wigglesworthia glossinidia brevipalpis.